We begin with the raw amino-acid sequence, 101 residues long: Small ribosomal subunit protein uS14A (101 aa).

The segment at 29–73 (AIISSPSTPADARAAAQSELNRQPRDASPVRVRNRDAVDGRPRGH) is disordered. Over residues 61-70 (RNRDAVDGRP) the composition is skewed to basic and acidic residues.

This sequence belongs to the universal ribosomal protein uS14 family. As to quaternary structure, part of the 30S ribosomal subunit. Contacts proteins S3 and S10.

Functionally, binds 16S rRNA, required for the assembly of 30S particles and may also be responsible for determining the conformation of the 16S rRNA at the A site. The protein is Small ribosomal subunit protein uS14A of Mycolicibacterium gilvum (strain PYR-GCK) (Mycobacterium gilvum (strain PYR-GCK)).